The following is a 250-amino-acid chain: L-ascorbate peroxidase 1, cytosolic (250 aa).

Residue H42 is the Proton acceptor of the active site. Residues 113 to 137 (VPFHPGREDKPAPPPEGRLPDATKG) are disordered. H163 contacts heme b. Residues T164, T180, N182, and D187 each coordinate K(+).

It belongs to the peroxidase family. Ascorbate peroxidase subfamily. It depends on heme b as a cofactor. As to expression, expressed in roots, aerial vegetative parts and reproductive organs. Expressed in roots, leaves, stems and flowers.

It is found in the cytoplasm. The enzyme catalyses L-ascorbate + H2O2 = L-dehydroascorbate + 2 H2O. Inhibited by p-chloromercuriphenylsulfonic acid (CMPSA). Functionally, plays a key role in hydrogen peroxide removal. The sequence is that of L-ascorbate peroxidase 1, cytosolic from Oryza sativa subsp. japonica (Rice).